An 82-amino-acid chain; its full sequence is Small ribosomal subunit protein bS18 (82 aa).

Belongs to the bacterial ribosomal protein bS18 family. Part of the 30S ribosomal subunit. Forms a tight heterodimer with protein bS6.

Binds as a heterodimer with protein bS6 to the central domain of the 16S rRNA, where it helps stabilize the platform of the 30S subunit. This chain is Small ribosomal subunit protein bS18, found in Bartonella bacilliformis (strain ATCC 35685 / KC583 / Herrer 020/F12,63).